The chain runs to 330 residues: Protein pelota homolog (330 aa).

This sequence belongs to the eukaryotic release factor 1 family. Pelota subfamily. In terms of assembly, monomer. It depends on a divalent metal cation as a cofactor.

The protein localises to the cytoplasm. Functionally, may function in recognizing stalled ribosomes, interact with stem-loop structures in stalled mRNA molecules, and effect endonucleolytic cleavage of the mRNA. May play a role in the release non-functional ribosomes and degradation of damaged mRNAs. Has endoribonuclease activity. The chain is Protein pelota homolog from Pyrobaculum neutrophilum (strain DSM 2338 / JCM 9278 / NBRC 100436 / V24Sta) (Thermoproteus neutrophilus).